We begin with the raw amino-acid sequence, 240 residues long: Mannosyl-D-glycerate transport/metabolism system repressor MngR (240 aa).

The HTH gntR-type domain occupies 4 to 72 (KPLYRQIADR…QGSGTYVKEE (69 aa)). The H-T-H motif DNA-binding region spans 32-51 (ESALQTEFGVSRVTVRQALR).

Represses mngA and mngB. Regulates its own expression. The polypeptide is Mannosyl-D-glycerate transport/metabolism system repressor MngR (mngR) (Escherichia coli (strain K12)).